Consider the following 220-residue polypeptide: Probable metallo-hydrolase YybB (220 aa).

Residues His67, His69, Asp71, His72, His139, Asp158, and His200 each coordinate Zn(2+).

Belongs to the metallo-beta-lactamase superfamily. Zn(2+) is required as a cofactor.

The protein is Probable metallo-hydrolase YybB (yybB) of Bacillus subtilis (strain 168).